Reading from the N-terminus, the 260-residue chain is Global transcriptional regulator CodY (260 aa).

Residues 1 to 159 (MPNLLEKTRK…SSTVVGIQLL (159 aa)) form a GAF domain region. A DNA-binding region (H-T-H motif) is located at residues 207–226 (ASVIADRIGITRSVIVNALR).

It belongs to the CodY family.

The protein localises to the cytoplasm. Its function is as follows. DNA-binding global transcriptional regulator which is involved in the adaptive response to starvation and acts by directly or indirectly controlling the expression of numerous genes in response to nutrient availability. During rapid exponential growth, CodY is highly active and represses genes whose products allow adaptation to nutrient depletion. This Streptococcus uberis (strain ATCC BAA-854 / 0140J) protein is Global transcriptional regulator CodY.